The following is an 810-amino-acid chain: Leucine--tRNA ligase (810 aa).

The 'HIGH' region signature appears at proline 41 to histidine 52. The 'KMSKS' region motif lies at lysine 582–serine 586. Residue lysine 585 coordinates ATP.

It belongs to the class-I aminoacyl-tRNA synthetase family.

The protein resides in the cytoplasm. The catalysed reaction is tRNA(Leu) + L-leucine + ATP = L-leucyl-tRNA(Leu) + AMP + diphosphate. This is Leucine--tRNA ligase from Oenococcus oeni (strain ATCC BAA-331 / PSU-1).